The following is a 321-amino-acid chain: Large ribosomal RNA subunit accumulation protein YCED homolog 1, chloroplastic (321 aa).

Residues 1 to 32 (MSLVCSLSCVAPLPQTKQSRPSFLKLETCTLS) constitute a chloroplast transit peptide.

Belongs to the DUF177 domain family.

Its subcellular location is the plastid. It is found in the chloroplast stroma. It localises to the chloroplast nucleoid. In terms of biological role, plays a role in synthesis, processing and/or stability of 23S rRNA. Required for embryogenesis. The chain is Large ribosomal RNA subunit accumulation protein YCED homolog 1, chloroplastic from Arabidopsis thaliana (Mouse-ear cress).